A 206-amino-acid polypeptide reads, in one-letter code: MLGLIGKKVGMTQIFQKNGIVVPVTVIEFQPNYIIGKKTVDRDGYSALIAGSVDLKGSKVSKPIKGQYKSLKDIEPKKYVIELKGLDGYDAGDEIKVDVFKSVKYVDVTGTTKGKGFQGAMKRHNFSGGPSSHGSKFHRHLGGTGQATTPARTFKGTKMAGRMGGNQQTIQNLEVVLINEEKRAILVKGAVPGAKGSFVVVKKSKK.

Residues 127–151 (SGGPSSHGSKFHRHLGGTGQATTPA) form a disordered region.

This sequence belongs to the universal ribosomal protein uL3 family. In terms of assembly, part of the 50S ribosomal subunit. Forms a cluster with proteins L14 and L19.

Its function is as follows. One of the primary rRNA binding proteins, it binds directly near the 3'-end of the 23S rRNA, where it nucleates assembly of the 50S subunit. The chain is Large ribosomal subunit protein uL3 from Borreliella afzelii (strain PKo) (Borrelia afzelii).